The primary structure comprises 417 residues: Origin of replication complex subunit 4 (417 aa).

59 to 66 (GPRGSGKA) serves as a coordination point for ATP.

Belongs to the ORC4 family. Component of the origin recognition complex (ORC) composed of at least ORC1 (ORC1A or ORC1B), ORC2, ORC3, ORC4, ORC5 and ORC6. ORC is regulated in a cell-cycle and development dependent manner. It is sequentially assembled at the exit from anaphase of mitosis and disassembled as cells enter S phase. Interacts directly with ORC1A, ORC2, ORC3, ORC5 and ORC6. In terms of tissue distribution, follow a cell-cycle regulation with a peak at the G1/S-phase. Isoform AtORC4a is expressed at low levels ubiquitously. Isoform AtORC4b is mostly expressed in siliques, flowers and flower buds, and, to a lower exent, in roots, leaves and stems.

Its subcellular location is the nucleus. Its function is as follows. Component of the origin recognition complex (ORC) that binds origins of replication. DNA-binding is ATP-dependent. The specific DNA sequences that define origins of replication have not been identified yet. ORC is required to assemble the pre-replication complex necessary to initiate DNA replication. This chain is Origin of replication complex subunit 4, found in Arabidopsis thaliana (Mouse-ear cress).